Reading from the N-terminus, the 290-residue chain is Phosphatidylglycerol--prolipoprotein diacylglyceryl transferase (290 aa).

The next 7 membrane-spanning stretches (helical) occupy residues 21-41 (VSLH…MWLA), 60-80 (LLYA…VLFY), 96-116 (WDGG…MLWF), 124-144 (FFQV…AGRL), 199-219 (SQLY…NLFI), 226-246 (GSVS…VECF), and 259-279 (VISM…IMMI). A 1,2-diacyl-sn-glycero-3-phospho-(1'-sn-glycerol) is bound at residue Arg-143.

The protein belongs to the Lgt family.

It localises to the cell inner membrane. It carries out the reaction L-cysteinyl-[prolipoprotein] + a 1,2-diacyl-sn-glycero-3-phospho-(1'-sn-glycerol) = an S-1,2-diacyl-sn-glyceryl-L-cysteinyl-[prolipoprotein] + sn-glycerol 1-phosphate + H(+). Its pathway is protein modification; lipoprotein biosynthesis (diacylglyceryl transfer). In terms of biological role, catalyzes the transfer of the diacylglyceryl group from phosphatidylglycerol to the sulfhydryl group of the N-terminal cysteine of a prolipoprotein, the first step in the formation of mature lipoproteins. The chain is Phosphatidylglycerol--prolipoprotein diacylglyceryl transferase from Yersinia enterocolitica serotype O:8 / biotype 1B (strain NCTC 13174 / 8081).